The sequence spans 434 residues: UPF0053 protein YrkA (434 aa).

Residues 1 to 201 (MTTINLIIFT…YKSGEINQNE (201 aa)) form the CNNM transmembrane domain. Helical transmembrane passes span 7 to 27 (IIFTLLIVLTAFFVATEFAIV), 64 to 84 (LGITVTALGIGWVGESTFEVI), and 101 to 121 (VLILVIAFVMATFLHVVVGEL). CBS domains are found at residues 220–282 (MIPR…KIKE) and 289–346 (HINP…IRDE).

Belongs to the UPF0053 family.

The protein localises to the cell membrane. The polypeptide is UPF0053 protein YrkA (yrkA) (Bacillus subtilis (strain 168)).